A 273-amino-acid polypeptide reads, in one-letter code: Undecaprenyl-diphosphatase (273 aa).

A run of 9 helical transmembrane segments spans residues 1–21 (MEPIQGVVLGIIQGLTEFLPV), 39–59 (PALFFDVSLHMGTLLAVLIVF), 63–83 (LGMMAVSVGRGIVAMFGGIAP), 92–112 (LKLALLIVVGSVPTAILGLGL), 118–138 (LFFSLPLVGAMLLVTGTLLWL), 165–185 (GLAVLPGISRSGATIAAGLFL), 195–215 (FSFLLCIPAIVGAELLSAVDL), 225–245 (ATVLGSLTAFVVGYGALKVLI), and 252–272 (RFYLFAPYCFILGGVTLWIGM).

Belongs to the UppP family.

Its subcellular location is the cell inner membrane. The catalysed reaction is di-trans,octa-cis-undecaprenyl diphosphate + H2O = di-trans,octa-cis-undecaprenyl phosphate + phosphate + H(+). Functionally, catalyzes the dephosphorylation of undecaprenyl diphosphate (UPP). Confers resistance to bacitracin. The protein is Undecaprenyl-diphosphatase of Desulfosudis oleivorans (strain DSM 6200 / JCM 39069 / Hxd3) (Desulfococcus oleovorans).